We begin with the raw amino-acid sequence, 174 residues long: Co-chaperone protein HscB (174 aa).

Residues 2-74 form the J domain; sequence DYFTLFGLPA…LKRAEYMLSL (73 aa).

The protein belongs to the HscB family. In terms of assembly, interacts with HscA and stimulates its ATPase activity. Interacts with IscU.

Functionally, co-chaperone involved in the maturation of iron-sulfur cluster-containing proteins. Seems to help targeting proteins to be folded toward HscA. This Yersinia pestis bv. Antiqua (strain Antiqua) protein is Co-chaperone protein HscB.